The primary structure comprises 210 residues: Transcriptional regulator GfcR (210 aa).

The segment at Val39–Ile60 is disordered. Over residues Pro48–Ile60 the composition is skewed to basic and acidic residues.

It belongs to the purine/pyrimidine phosphoribosyltransferase family. GfcR subfamily.

With respect to regulation, interaction with effectors modulates GfcR activity. 2-keto-3-deoxy-6-phosphogluconate (KDPG), fructose-1,6-bisphosphate (FBP), 2-keto-3-deoxy-6-phosphogalactonate (KDPGal) and glycerol-3-phosphate (G3P), which are intermediates of sugar and glycerol degradation pathways, can act as inducer molecules. Functionally, DNA-binding transcriptional regulator that functions as a regulator of central sugar catabolic pathways. Is both a local regulator of specific steps in the pathways for D-glucose and D-fructose degradation and a global regulator of hexose catabolism. In the presence of D-glucose, activates expression of the gene encoding the gluconate dehydratase (gad), which is involved in D-glucose catabolism via the semiphosphorylative Entner-Doudoroff (spED) pathway. In the presence of D-fructose, activates expression of the genes encoding the PTS system EIIC component (ptfC) and the fructose-1,6-bisphosphate aldolase (fba), which are involved in D-fructose uptake and degradation via the modified Embden-Meyerhof pathway. In addition, in the presence of D-glucose, D-fructose, D-galactose or glycerol, it activates expression of the genes encoding glyceraldehyde-3-phosphate dehydrogenase (gap) and pyruvate kinase (pykA), enzymes common to all four degradation pathways. Acts by binding directly to the promoter region of the regulated genes. The polypeptide is Transcriptional regulator GfcR (Haloferax volcanii (strain ATCC 29605 / DSM 3757 / JCM 8879 / NBRC 14742 / NCIMB 2012 / VKM B-1768 / DS2) (Halobacterium volcanii)).